The chain runs to 369 residues: Coproporphyrin III ferrochelatase (369 aa).

Positions 61 and 130 each coordinate Fe-coproporphyrin III. Residues His197 and Glu286 each coordinate Fe(2+).

Belongs to the ferrochelatase family.

It localises to the cytoplasm. It catalyses the reaction Fe-coproporphyrin III + 2 H(+) = coproporphyrin III + Fe(2+). The protein operates within porphyrin-containing compound metabolism; protoheme biosynthesis. Its function is as follows. Involved in coproporphyrin-dependent heme b biosynthesis. Catalyzes the insertion of ferrous iron into coproporphyrin III to form Fe-coproporphyrin III. This is Coproporphyrin III ferrochelatase from Corynebacterium diphtheriae (strain ATCC 700971 / NCTC 13129 / Biotype gravis).